We begin with the raw amino-acid sequence, 364 residues long: Phosphoserine aminotransferase (364 aa).

R42 lines the L-glutamate pocket. Residues 76–77, W102, T156, D175, and Q198 contribute to the pyridoxal 5'-phosphate site; that span reads GR. N6-(pyridoxal phosphate)lysine is present on K199. A pyridoxal 5'-phosphate-binding site is contributed by 240-241; the sequence is NT.

The protein belongs to the class-V pyridoxal-phosphate-dependent aminotransferase family. SerC subfamily. Homodimer. The cofactor is pyridoxal 5'-phosphate.

Its subcellular location is the cytoplasm. It carries out the reaction O-phospho-L-serine + 2-oxoglutarate = 3-phosphooxypyruvate + L-glutamate. The catalysed reaction is 4-(phosphooxy)-L-threonine + 2-oxoglutarate = (R)-3-hydroxy-2-oxo-4-phosphooxybutanoate + L-glutamate. Its pathway is amino-acid biosynthesis; L-serine biosynthesis; L-serine from 3-phospho-D-glycerate: step 2/3. It participates in cofactor biosynthesis; pyridoxine 5'-phosphate biosynthesis; pyridoxine 5'-phosphate from D-erythrose 4-phosphate: step 3/5. Its function is as follows. Catalyzes the reversible conversion of 3-phosphohydroxypyruvate to phosphoserine and of 3-hydroxy-2-oxo-4-phosphonooxybutanoate to phosphohydroxythreonine. This chain is Phosphoserine aminotransferase, found in Shewanella sediminis (strain HAW-EB3).